Here is a 341-residue protein sequence, read N- to C-terminus: MNYREAGVDIEAGRAFVGDIRSLVESTRRPGVLGGLGGFGGFFELPSGYRQPVLVSGTDGVGTKLKIAHQVGRHDSIGIDLVAMCVNDILTAGAEPLYFLDYLATGRLDREQLTAVVQGIAAGCRESGCALLGGETAEMPGFYEAGEYDVAGFAVGIAEKSELLDGSQVQLGDVAIALASSGVHSNGYSLVRKVVANSGLDWTSSQTIFEGQSLGDVFLTPTRLYVKPILAAKAQKIPIHGMAHITGGGLPENLPRCLGPNQTVAIDLESWKWPTVFRWLAKQGNIADSEMFNTFNMGVGLVVIVPAAAETQALKFFKAQGQTAWTLGEVVTGDGTLIGLP.

Belongs to the AIR synthase family.

It localises to the cytoplasm. It carries out the reaction 2-formamido-N(1)-(5-O-phospho-beta-D-ribosyl)acetamidine + ATP = 5-amino-1-(5-phospho-beta-D-ribosyl)imidazole + ADP + phosphate + H(+). It participates in purine metabolism; IMP biosynthesis via de novo pathway; 5-amino-1-(5-phospho-D-ribosyl)imidazole from N(2)-formyl-N(1)-(5-phospho-D-ribosyl)glycinamide: step 2/2. This chain is Phosphoribosylformylglycinamidine cyclo-ligase, found in Synechococcus elongatus (strain ATCC 33912 / PCC 7942 / FACHB-805) (Anacystis nidulans R2).